Reading from the N-terminus, the 120-residue chain is Cell division topological specificity factor (120 aa).

The disordered stretch occupies residues 93 to 120 (LNSCEGENPQQDPGAAPSEGGHLSSPSP).

Belongs to the MinE family.

Functionally, prevents the cell division inhibition by proteins MinC and MinD at internal division sites while permitting inhibition at polar sites. This ensures cell division at the proper site by restricting the formation of a division septum at the midpoint of the long axis of the cell. This chain is Cell division topological specificity factor, found in Synechococcus sp. (strain JA-3-3Ab) (Cyanobacteria bacterium Yellowstone A-Prime).